Here is a 416-residue protein sequence, read N- to C-terminus: Putative competence-damage inducible protein (416 aa).

It belongs to the CinA family.

The protein is Putative competence-damage inducible protein of Bacillus pumilus (strain SAFR-032).